Consider the following 186-residue polypeptide: Putative manganese efflux pump MntP (186 aa).

6 consecutive transmembrane segments (helical) span residues 5-25 (VLIG…MDAF), 41-61 (VFQI…GGMI), 72-92 (ALAG…MIVA), 107-127 (FGLF…GLSL), 135-155 (ILTI…GLLL), and 166-186 (YSEA…LLPI).

Belongs to the MntP (TC 9.B.29) family.

Its subcellular location is the cell membrane. Its function is as follows. Probably functions as a manganese efflux pump. This chain is Putative manganese efflux pump MntP, found in Bacillus licheniformis (strain ATCC 14580 / DSM 13 / JCM 2505 / CCUG 7422 / NBRC 12200 / NCIMB 9375 / NCTC 10341 / NRRL NRS-1264 / Gibson 46).